The primary structure comprises 302 residues: uncharacterized protein (302 aa).

Residues 13 to 89 (QTLFKFLKKT…VNLDIVYEDN (77 aa)) form the S4 RNA-binding domain. The active site involves Asp-141.

Belongs to the pseudouridine synthase RluA family.

The enzyme catalyses a uridine in RNA = a pseudouridine in RNA. This is an uncharacterized protein from Mycoplasma capricolum subsp. capricolum (strain California kid / ATCC 27343 / NCTC 10154).